Reading from the N-terminus, the 149-residue chain is Ubiquitin-conjugating enzyme E2 pex4 (149 aa).

The UBC core domain maps to 1-149; the sequence is MAARLMKEYK…ARMYTRLYGC (149 aa). The active-site Glycyl thioester intermediate is the C86.

This sequence belongs to the ubiquitin-conjugating enzyme family.

The enzyme catalyses S-ubiquitinyl-[E1 ubiquitin-activating enzyme]-L-cysteine + [E2 ubiquitin-conjugating enzyme]-L-cysteine = [E1 ubiquitin-activating enzyme]-L-cysteine + S-ubiquitinyl-[E2 ubiquitin-conjugating enzyme]-L-cysteine.. The protein operates within protein modification; protein ubiquitination. Its function is as follows. Catalyzes the covalent attachment of ubiquitin to other proteins. Essential for peroxisome biogenesis. The polypeptide is Ubiquitin-conjugating enzyme E2 pex4 (pex4) (Dictyostelium discoideum (Social amoeba)).